The sequence spans 143 residues: Ribosome maturation factor RimP (143 aa).

It belongs to the RimP family.

The protein localises to the cytoplasm. Its function is as follows. Required for maturation of 30S ribosomal subunits. The chain is Ribosome maturation factor RimP from Nitrosomonas eutropha (strain DSM 101675 / C91 / Nm57).